The chain runs to 169 residues: Protein-export protein SecB (169 aa).

The protein belongs to the SecB family. In terms of assembly, homotetramer, a dimer of dimers. One homotetramer interacts with 1 SecA dimer.

It localises to the cytoplasm. Functionally, one of the proteins required for the normal export of preproteins out of the cell cytoplasm. It is a molecular chaperone that binds to a subset of precursor proteins, maintaining them in a translocation-competent state. It also specifically binds to its receptor SecA. This Haemophilus influenzae (strain PittEE) protein is Protein-export protein SecB.